Here is a 217-residue protein sequence, read N- to C-terminus: Large ribosomal subunit protein uL3 (217 aa).

It belongs to the universal ribosomal protein uL3 family. Part of the 50S ribosomal subunit. Forms a cluster with proteins L14 and L19.

In terms of biological role, one of the primary rRNA binding proteins, it binds directly near the 3'-end of the 23S rRNA, where it nucleates assembly of the 50S subunit. This chain is Large ribosomal subunit protein uL3, found in Mycobacterium sp. (strain KMS).